Here is a 512-residue protein sequence, read N- to C-terminus: Cytochrome P450 1A1 (512 aa).

The mitochondrial targeting signal stretch occupies residues S29–P40. S67 is a glycosylation site (O-linked (GlcNAc) serine). F224 is a substrate binding site. C457 is a heme binding site.

This sequence belongs to the cytochrome P450 family. As to quaternary structure, interacts with cytosolic chaperones HSP70 and HSP90; this interaction is required for initial targeting to mitochondria. Interacts (via mitochondrial targeting signal) with TOMM40 (via N-terminus); this interaction is required for translocation across the mitochondrial outer membrane. Heme serves as cofactor. As to expression, lung, lymphocytes and placenta.

It is found in the endoplasmic reticulum membrane. The protein resides in the mitochondrion inner membrane. The protein localises to the microsome membrane. Its subcellular location is the cytoplasm. It carries out the reaction an organic molecule + reduced [NADPH--hemoprotein reductase] + O2 = an alcohol + oxidized [NADPH--hemoprotein reductase] + H2O + H(+). The enzyme catalyses estrone + reduced [NADPH--hemoprotein reductase] + O2 = 2-hydroxyestrone + oxidized [NADPH--hemoprotein reductase] + H2O + H(+). It catalyses the reaction estrone + reduced [NADPH--hemoprotein reductase] + O2 = 4-hydroxyestrone + oxidized [NADPH--hemoprotein reductase] + H2O + H(+). The catalysed reaction is estrone + reduced [NADPH--hemoprotein reductase] + O2 = 6alpha-hydroxyestrone + oxidized [NADPH--hemoprotein reductase] + H2O + H(+). It carries out the reaction estrone + reduced [NADPH--hemoprotein reductase] + O2 = 15alpha-hydroxyestrone + oxidized [NADPH--hemoprotein reductase] + H2O + H(+). The enzyme catalyses estrone + reduced [NADPH--hemoprotein reductase] + O2 = 16alpha-hydroxyestrone + oxidized [NADPH--hemoprotein reductase] + H2O + H(+). It catalyses the reaction 17beta-estradiol + reduced [NADPH--hemoprotein reductase] + O2 = 2-hydroxy-17beta-estradiol + oxidized [NADPH--hemoprotein reductase] + H2O + H(+). The catalysed reaction is 17beta-estradiol + reduced [NADPH--hemoprotein reductase] + O2 = 4-hydroxy-17beta-estradiol + oxidized [NADPH--hemoprotein reductase] + H2O + H(+). It carries out the reaction 17beta-estradiol + reduced [NADPH--hemoprotein reductase] + O2 = 6alpha-hydroxy-17beta-estradiol + oxidized [NADPH--hemoprotein reductase] + H2O + H(+). The enzyme catalyses 17beta-estradiol + reduced [NADPH--hemoprotein reductase] + O2 = 7alpha-hydroxy-17beta-estradiol + oxidized [NADPH--hemoprotein reductase] + H2O + H(+). It catalyses the reaction 17beta-estradiol + reduced [NADPH--hemoprotein reductase] + O2 = 15alpha-hydroxy-17beta-estradiol + oxidized [NADPH--hemoprotein reductase] + H2O + H(+). The catalysed reaction is (5Z,8Z,11Z)-eicosatrienoate + reduced [NADPH--hemoprotein reductase] + O2 = 19-hydroxy-(5Z,8Z,11Z)-eicosatrienoate + oxidized [NADPH--hemoprotein reductase] + H2O + H(+). It carries out the reaction (5Z,8Z,11Z,14Z)-eicosatetraenoate + reduced [NADPH--hemoprotein reductase] + O2 = 16-hydroxy-(5Z,8Z,11Z,14Z)-eicosatetraenoate + oxidized [NADPH--hemoprotein reductase] + H2O + H(+). The enzyme catalyses (5Z,8Z,11Z,14Z)-eicosatetraenoate + reduced [NADPH--hemoprotein reductase] + O2 = 17-hydroxy-(5Z,8Z,11Z,14Z)-eicosatetraenoate + oxidized [NADPH--hemoprotein reductase] + H2O + H(+). It catalyses the reaction (5Z,8Z,11Z,14Z)-eicosatetraenoate + reduced [NADPH--hemoprotein reductase] + O2 = 18-hydroxy-(5Z,8Z,11Z,14Z)-eicosatetraenoate + oxidized [NADPH--hemoprotein reductase] + H2O + H(+). The catalysed reaction is (5Z,8Z,11Z,14Z)-eicosatetraenoate + reduced [NADPH--hemoprotein reductase] + O2 = 19-hydroxy-(5Z,8Z,11Z,14Z)-eicosatetraenoate + oxidized [NADPH--hemoprotein reductase] + H2O + H(+). It carries out the reaction (5Z,8Z,11Z,14Z,17Z)-eicosapentaenoate + reduced [NADPH--hemoprotein reductase] + O2 = 19-hydroxy-(5Z,8Z,11Z,14Z,17Z)-eicosapentaenoate + oxidized [NADPH--hemoprotein reductase] + H2O + H(+). The enzyme catalyses (5Z,8Z,11Z,14Z)-eicosatetraenoate + reduced [NADPH--hemoprotein reductase] + O2 = (8R,9S)-epoxy-(5Z,11Z,14Z)-eicosatrienoate + oxidized [NADPH--hemoprotein reductase] + H2O + H(+). It catalyses the reaction (5Z,8Z,11Z,14Z)-eicosatetraenoate + reduced [NADPH--hemoprotein reductase] + O2 = (11R,12S)-epoxy-(5Z,8Z,14Z)-eicosatrienoate + oxidized [NADPH--hemoprotein reductase] + H2O + H(+). The catalysed reaction is (5Z,8Z,11Z,14Z)-eicosatetraenoate + reduced [NADPH--hemoprotein reductase] + O2 = (14S,15R)-epoxy-(5Z,8Z,11Z)-eicosatrienoate + oxidized [NADPH--hemoprotein reductase] + H2O + H(+). It carries out the reaction (5Z,8Z,11Z,14Z)-eicosatetraenoate + reduced [NADPH--hemoprotein reductase] + O2 = (14R,15S)-epoxy-(5Z,8Z,11Z)-eicosatrienoate + oxidized [NADPH--hemoprotein reductase] + H2O + H(+). The enzyme catalyses (5Z,8Z,11Z,14Z,17Z)-eicosapentaenoate + reduced [NADPH--hemoprotein reductase] + O2 = (17R,18S)-epoxy-(5Z,8Z,11Z,14Z)-eicosatetraenoate + oxidized [NADPH--hemoprotein reductase] + H2O + H(+). It catalyses the reaction (4Z,7Z,10Z,13Z,16Z,19Z)-docosahexaenoate + reduced [NADPH--hemoprotein reductase] + O2 = (19S,20R)-epoxy-(4Z,7Z,10Z,13Z,16Z)-docosapentaenoate + oxidized [NADPH--hemoprotein reductase] + H2O + H(+). The catalysed reaction is (4Z,7Z,10Z,13Z,16Z,19Z)-docosahexaenoate + reduced [NADPH--hemoprotein reductase] + O2 = (19R,20S)-epoxy-(4Z,7Z,10Z,13Z,16Z)-docosapentaenoate + oxidized [NADPH--hemoprotein reductase] + H2O + H(+). It carries out the reaction all-trans-retinol + reduced [NADPH--hemoprotein reductase] + O2 = all-trans-retinal + oxidized [NADPH--hemoprotein reductase] + 2 H2O + H(+). The enzyme catalyses all-trans-retinal + reduced [NADPH--hemoprotein reductase] + O2 = all-trans-retinoate + oxidized [NADPH--hemoprotein reductase] + H2O + 2 H(+). It catalyses the reaction (13S)-hydroperoxy-(9Z,11E)-octadecadienoate = 13-oxo-(9Z,11E)-octadecadienoate + H2O. The catalysed reaction is (12S)-hydroperoxy-(5Z,8Z,10E,14Z)-eicosatetraenoate = 12-oxo-(5Z,8Z,10E,14Z)-eicosatetraenoate + H2O. It carries out the reaction (15S)-hydroperoxy-(5Z,8Z,11Z,13E)-eicosatetraenoate = 15-oxo-(5Z,8Z,11Z,13E)-eicosatetraenoate + H2O. The enzyme catalyses (5S)-hydroperoxy-(6E,8Z,11Z,14Z)-eicosatetraenoate = 5-oxo-(6E,8Z,11Z,14Z)-eicosatetraenoate + H2O. The protein operates within steroid hormone biosynthesis. It functions in the pathway lipid metabolism; fatty acid metabolism. Its pathway is cofactor metabolism; retinol metabolism. A cytochrome P450 monooxygenase involved in the metabolism of various endogenous substrates, including fatty acids, steroid hormones and vitamins. Mechanistically, uses molecular oxygen inserting one oxygen atom into a substrate, and reducing the second into a water molecule, with two electrons provided by NADPH via cytochrome P450 reductase (NADPH--hemoprotein reductase). Catalyzes the hydroxylation of carbon-hydrogen bonds. Exhibits high catalytic activity for the formation of hydroxyestrogens from estrone (E1) and 17beta-estradiol (E2), namely 2-hydroxy E1 and E2, as well as D-ring hydroxylated E1 and E2 at the C15-alpha and C16-alpha positions. Displays different regioselectivities for polyunsaturated fatty acids (PUFA) hydroxylation. Catalyzes the epoxidation of double bonds of certain PUFA. Converts arachidonic acid toward epoxyeicosatrienoic acid (EET) regioisomers, 8,9-, 11,12-, and 14,15-EET, that function as lipid mediators in the vascular system. Displays an absolute stereoselectivity in the epoxidation of eicosapentaenoic acid (EPA) producing the 17(R),18(S) enantiomer. May play an important role in all-trans retinoic acid biosynthesis in extrahepatic tissues. Catalyzes two successive oxidative transformation of all-trans retinol to all-trans retinal and then to the active form all-trans retinoic acid. May also participate in eicosanoids metabolism by converting hydroperoxide species into oxo metabolites (lipoxygenase-like reaction, NADPH-independent). The protein is Cytochrome P450 1A1 of Homo sapiens (Human).